We begin with the raw amino-acid sequence, 233 residues long: Sugar fermentation stimulation protein homolog (233 aa).

It belongs to the SfsA family.

In Acetivibrio thermocellus (strain ATCC 27405 / DSM 1237 / JCM 9322 / NBRC 103400 / NCIMB 10682 / NRRL B-4536 / VPI 7372) (Clostridium thermocellum), this protein is Sugar fermentation stimulation protein homolog.